Consider the following 510-residue polypeptide: Histidine ammonia-lyase (510 aa).

A cross-link (5-imidazolinone (Ala-Gly)) is located at residues 143–145; it reads ASG. Serine 144 bears the 2,3-didehydroalanine (Ser) mark.

Belongs to the PAL/histidase family. In terms of processing, contains an active site 4-methylidene-imidazol-5-one (MIO), which is formed autocatalytically by cyclization and dehydration of residues Ala-Ser-Gly.

Its subcellular location is the cytoplasm. The enzyme catalyses L-histidine = trans-urocanate + NH4(+). Its pathway is amino-acid degradation; L-histidine degradation into L-glutamate; N-formimidoyl-L-glutamate from L-histidine: step 1/3. The polypeptide is Histidine ammonia-lyase (Shewanella piezotolerans (strain WP3 / JCM 13877)).